Consider the following 282-residue polypeptide: NADPH-dependent 7-cyano-7-deazaguanine reductase (282 aa).

A substrate-binding site is contributed by 88-90 (IES). Position 90–91 (90–91 (SK)) interacts with NADPH. Catalysis depends on C190, which acts as the Thioimide intermediate. D197 acts as the Proton donor in catalysis. 229–230 (HE) lines the substrate pocket. 258–259 (RG) contributes to the NADPH binding site.

The protein belongs to the GTP cyclohydrolase I family. QueF type 2 subfamily. As to quaternary structure, homodimer.

The protein resides in the cytoplasm. The catalysed reaction is 7-aminomethyl-7-carbaguanine + 2 NADP(+) = 7-cyano-7-deazaguanine + 2 NADPH + 3 H(+). It participates in tRNA modification; tRNA-queuosine biosynthesis. Catalyzes the NADPH-dependent reduction of 7-cyano-7-deazaguanine (preQ0) to 7-aminomethyl-7-deazaguanine (preQ1). The chain is NADPH-dependent 7-cyano-7-deazaguanine reductase from Salmonella paratyphi C (strain RKS4594).